Reading from the N-terminus, the 465-residue chain is Iron-sulfur cluster assembly SufBD family protein SERP0500 (465 aa).

This sequence belongs to the iron-sulfur cluster assembly SufBD family.

This is Iron-sulfur cluster assembly SufBD family protein SERP0500 from Staphylococcus epidermidis (strain ATCC 35984 / DSM 28319 / BCRC 17069 / CCUG 31568 / BM 3577 / RP62A).